Reading from the N-terminus, the 105-residue chain is Large ribosomal subunit protein uL24 (105 aa).

It belongs to the universal ribosomal protein uL24 family. Part of the 50S ribosomal subunit.

Its function is as follows. One of two assembly initiator proteins, it binds directly to the 5'-end of the 23S rRNA, where it nucleates assembly of the 50S subunit. Functionally, one of the proteins that surrounds the polypeptide exit tunnel on the outside of the subunit. This is Large ribosomal subunit protein uL24 from Staphylococcus haemolyticus (strain JCSC1435).